Here is a 429-residue protein sequence, read N- to C-terminus: Malate dehydrogenase [NADP] 1, chloroplastic (429 aa).

The N-terminal 40 residues, 1–40, are a transit peptide targeting the chloroplast; that stretch reads MGLSTAYSPVGSHLAPAPLGHRRSAQLHRPRRALLATVRC. Cys64 and Cys69 are oxidised to a cystine. 93–99 contacts NADP(+); the sequence is GAAGMIS. The substrate site is built by Arg174 and Arg180. NADP(+) contacts are provided by residues Asn187, Gln194, and 211 to 213; that span reads VGN. Substrate contacts are provided by Asn213 and Arg244. Catalysis depends on His269, which acts as the Proton acceptor. An intrachain disulfide couples Cys405 to Cys417.

This sequence belongs to the LDH/MDH superfamily. MDH type 2 family. Homodimer.

The protein resides in the plastid. It is found in the chloroplast. The catalysed reaction is (S)-malate + NADP(+) = oxaloacetate + NADPH + H(+). With respect to regulation, chloroplast NADP-MDH is activated upon illumination. In order to be enzymatically active, disulfide bridges on the protein must be reduced by thioredoxin which receives electrons from ferredoxin and the electron transport system of photosynthesis. The chloroplastic, NADP-dependent form is essential for the photosynthesis C4 cycle, which allows plants to circumvent the problem of photorespiration. In C4 plants, NADP-MDH activity acts to convert oxaloacetate to malate in chloroplasts of mesophyll cells for transport to the bundle sheath cells. The chain is Malate dehydrogenase [NADP] 1, chloroplastic from Sorghum bicolor (Sorghum).